Reading from the N-terminus, the 1737-residue chain is Intraflagellar transport protein osm-1 (1737 aa).

WD repeat units lie at residues 14–53 (DGEAKISNISCSPNGSRAAIACSDRSVALLDENGVQKDRF), 63–103 (GKKS…NEKK), 110–150 (VQPS…SLYK), 151–189 (TDETVVSIQTHPKRTSFVSAHQDGSIILYNFSSRTQSKI), 191–229 (TLQVPPYNLVFTNHGLVVATSDRRVLSYTENGVVQQQFD), 233–273 (QSEK…WDEG), and 511–553 (DQRS…EQVT). TPR repeat units follow at residues 700–737 (NDTESAIGMYTSLHKWDEALELAKVLNYPEYEQLKTSY), 803–836 (SQLYDKAGDVYEKLKDFDKAVEYFKKGDAYGKAI), 848–881 (VTLEQEWGLHLEYIGQYDAAVNHFVEANDLKKAV), 907–940 (TGYYGEIADHYSNKGDFERAERLFVEAGLFNDAI), 979–1012 (HGRFAEAEQLYITIGMPHKAIQMYDRVGRDDDVL), 1037–1070 (RGDLKAAEEQFLKAGDFRSAVNMYKDSEMWSDAY), and 1137–1170 (GTVHVRLATQLEEEGRLEDASKHYVEGNKPELAV).

This sequence belongs to the IFT172 family. In terms of assembly, component of the IFT complex B composed of at least che-2, che-13, dyf-1, dyf-3, dyf-6, dyf-11, dyf-13, ift-20, ift-74, ift-81, ifta-2, osm-1, osm-5 and osm-6. Expressed in amphid and phasmid chemosensory neurons, where it appears to concentrate at the base of the transition zones, which correspond to the basal bodies of motile and sensory cilia. Moves in the retrograde direction along cilia and dendrites, suggesting that it is retrieved from the distal endings of the cilia by a retrograde transport pathway that moves it along cilia and then dendrites, back to the neuronal cell body.

Its subcellular location is the cell projection. It is found in the cilium. Its function is as follows. Component of the intraflagellar transport (IFT) complex B required for transport of proteins in the motile cilium. May be required for ciliary entrance and transport of specific ciliary cargo proteins such as che-3 which are related to motility. Required for the maintenance and formation of chemosensory cilia that detect chemosensory cues. This is Intraflagellar transport protein osm-1 from Caenorhabditis elegans.